The sequence spans 215 residues: UPF0502 protein YceH (215 aa).

This sequence belongs to the UPF0502 family.

The sequence is that of UPF0502 protein YceH from Salmonella paratyphi C (strain RKS4594).